The following is a 360-amino-acid chain: Geranylgeranyl pyrophosphate synthase 12, chloroplastic (360 aa).

The N-terminal 39 residues, 1–39 (MANTVHLSSSSLFIQTRGRKYNSILSFNNLQKRTVLSLS), are a transit peptide targeting the chloroplast. Residues Lys106, Arg109, and His138 each contribute to the isopentenyl diphosphate site. Mg(2+) is bound by residues Asp145 and Asp151. Position 156 (Arg156) interacts with dimethylallyl diphosphate. Arg157 serves as a coordination point for isopentenyl diphosphate. Residues Lys245, Thr246, Gln283, Lys300, and Lys310 each coordinate dimethylallyl diphosphate.

Belongs to the FPP/GGPP synthase family. As to quaternary structure, monomer. It depends on Mg(2+) as a cofactor.

It is found in the plastid. Its subcellular location is the chloroplast. It catalyses the reaction isopentenyl diphosphate + dimethylallyl diphosphate = (2E)-geranyl diphosphate + diphosphate. The enzyme catalyses isopentenyl diphosphate + (2E)-geranyl diphosphate = (2E,6E)-farnesyl diphosphate + diphosphate. It carries out the reaction isopentenyl diphosphate + (2E,6E)-farnesyl diphosphate = (2E,6E,10E)-geranylgeranyl diphosphate + diphosphate. The protein operates within isoprenoid biosynthesis; farnesyl diphosphate biosynthesis; farnesyl diphosphate from geranyl diphosphate and isopentenyl diphosphate: step 1/1. It functions in the pathway isoprenoid biosynthesis; geranyl diphosphate biosynthesis; geranyl diphosphate from dimethylallyl diphosphate and isopentenyl diphosphate: step 1/1. Its pathway is isoprenoid biosynthesis; geranylgeranyl diphosphate biosynthesis; geranylgeranyl diphosphate from farnesyl diphosphate and isopentenyl diphosphate: step 1/1. Functionally, catalyzes the trans-addition of the three molecules of IPP onto DMAPP to form geranylgeranyl pyrophosphate. The polypeptide is Geranylgeranyl pyrophosphate synthase 12, chloroplastic (Arabidopsis thaliana (Mouse-ear cress)).